The primary structure comprises 146 residues: Large ribosomal subunit protein uL15 (146 aa).

Positions methionine 1–glutamine 54 are disordered. Composition is skewed to gly residues over residues arginine 21 to alanine 31 and serine 42 to glycine 52.

The protein belongs to the universal ribosomal protein uL15 family. In terms of assembly, part of the 50S ribosomal subunit.

Functionally, binds to the 23S rRNA. The chain is Large ribosomal subunit protein uL15 from Clostridium perfringens (strain ATCC 13124 / DSM 756 / JCM 1290 / NCIMB 6125 / NCTC 8237 / Type A).